The sequence spans 450 residues: Ig mu chain C region (450 aa).

The chain is Ig mu chain C region from Canis lupus familiaris (Dog).